The sequence spans 276 residues: 5-deoxy-glucuronate isomerase (276 aa).

It belongs to the isomerase IolB family.

The enzyme catalyses 5-deoxy-D-glucuronate = 5-dehydro-2-deoxy-D-gluconate. It participates in polyol metabolism; myo-inositol degradation into acetyl-CoA; acetyl-CoA from myo-inositol: step 4/7. In terms of biological role, involved in the isomerization of 5-deoxy-glucuronate (5DG) to 5-dehydro-2-deoxy-D-gluconate (DKG or 2-deoxy-5-keto-D-gluconate). This is 5-deoxy-glucuronate isomerase from Geobacillus kaustophilus (strain HTA426).